The chain runs to 249 residues: tRNA (guanine-N(1)-)-methyltransferase (249 aa).

S-adenosyl-L-methionine contacts are provided by residues G112 and 132 to 137 (LGDFVL).

This sequence belongs to the RNA methyltransferase TrmD family. In terms of assembly, homodimer.

The protein localises to the cytoplasm. The enzyme catalyses guanosine(37) in tRNA + S-adenosyl-L-methionine = N(1)-methylguanosine(37) in tRNA + S-adenosyl-L-homocysteine + H(+). In terms of biological role, specifically methylates guanosine-37 in various tRNAs. This is tRNA (guanine-N(1)-)-methyltransferase from Citrifermentans bemidjiense (strain ATCC BAA-1014 / DSM 16622 / JCM 12645 / Bem) (Geobacter bemidjiensis).